Consider the following 548-residue polypeptide: Probable malate:quinone oxidoreductase (548 aa).

Residues 521-548 are disordered; it reads DKPQAADSTPKPQLKPKPVQKEVADIAL. Over residues 539–548 the composition is skewed to basic and acidic residues; the sequence is VQKEVADIAL.

Belongs to the MQO family. The cofactor is FAD.

It catalyses the reaction (S)-malate + a quinone = a quinol + oxaloacetate. The protein operates within carbohydrate metabolism; tricarboxylic acid cycle; oxaloacetate from (S)-malate (quinone route): step 1/1. The polypeptide is Probable malate:quinone oxidoreductase (Escherichia coli (strain ATCC 8739 / DSM 1576 / NBRC 3972 / NCIMB 8545 / WDCM 00012 / Crooks)).